The sequence spans 368 residues: Alanine racemase (368 aa).

Residue K40 is the Proton acceptor; specific for D-alanine of the active site. K40 carries the post-translational modification N6-(pyridoxal phosphate)lysine. R134 provides a ligand contact to substrate. Catalysis depends on Y263, which acts as the Proton acceptor; specific for L-alanine. M310 is a binding site for substrate.

This sequence belongs to the alanine racemase family. Pyridoxal 5'-phosphate serves as cofactor.

It catalyses the reaction L-alanine = D-alanine. It functions in the pathway amino-acid biosynthesis; D-alanine biosynthesis; D-alanine from L-alanine: step 1/1. Its function is as follows. Catalyzes the interconversion of L-alanine and D-alanine. May also act on other amino acids. The polypeptide is Alanine racemase (alr) (Listeria monocytogenes serovar 1/2a (strain ATCC BAA-679 / EGD-e)).